A 223-amino-acid polypeptide reads, in one-letter code: Guanylate kinase (223 aa).

A Guanylate kinase-like domain is found at 6-183 (GRLFVMTGAS…AVADFLAILT (178 aa)). Residue 13-20 (GASGVGKG) coordinates ATP.

This sequence belongs to the guanylate kinase family.

It localises to the cytoplasm. The catalysed reaction is GMP + ATP = GDP + ADP. Its function is as follows. Essential for recycling GMP and indirectly, cGMP. This chain is Guanylate kinase, found in Thermus thermophilus (strain ATCC 27634 / DSM 579 / HB8).